The sequence spans 323 residues: MGNSAAREDFEWVYTDQPHADRRKEILAKYPEIKSLMKPDHNLIWIVSLMVLTQLVAFYLVKDLDWKWLLFWTYVVGSCISHSMTLAIHEISHNSAFGNSKAMWNRCFGMFANLPLGLPYSVSFKRYHMDHHRYLGGDGVDVDIPTDFEGWFFCTPLRKLVWIILQPLFYTIRPLCINPKPITRLEIINLVVQFSFDALIYYTLGGKALFYMLVGSILGLGLHPISGHFIAEHYMFLKGHETYSYYGPLNYLTFNVGYHNEHHDFPSVPGKNLPLVRKIAAEYYDPLPKYSSWVKVLYDFVMDDTLSPYSRMKRKLKGDLKLE.

Transmembrane regions (helical) follow at residues 41 to 61 and 68 to 88; these read HNLIWIVSLMVLTQLVAFYLV and WLLFWTYVVGSCISHSMTLAI. Positions 89 to 93 match the Histidine box-1 motif; it reads HEISH. A helical transmembrane segment spans residues 104–124; that stretch reads WNRCFGMFANLPLGLPYSVSF. Positions 128–132 match the Histidine box-2 motif; sequence HMDHH. The next 3 helical transmembrane spans lie at 152–172, 185–205, and 210–230; these read FFCTPLRKLVWIILQPLFYTI, LEIINLVVQFSFDALIYYTLG, and FYMLVGSILGLGLHPISGHFI. Residues 259 to 263 carry the Histidine box-3 motif; it reads HNEHH.

The protein belongs to the fatty acid desaturase type 1 family. DEGS subfamily. In terms of assembly, interacts with RLBP1; the interaction increases synthesis of chromophore-precursors by DEGS1.

The protein localises to the endoplasmic reticulum membrane. It catalyses the reaction an N-acylsphinganine + 2 Fe(II)-[cytochrome b5] + O2 + 2 H(+) = an N-acylsphing-4-enine + 2 Fe(III)-[cytochrome b5] + 2 H2O. The enzyme catalyses all-trans-retinol = 11-cis-retinol. It carries out the reaction all-trans-retinol = 9-cis-retinol. The catalysed reaction is all-trans-retinol = 13-cis-retinol. It catalyses the reaction 11-cis-retinol = 13-cis-retinol. The enzyme catalyses 11-cis-retinol = 9-cis-retinol. Functionally, has sphingolipid-delta-4-desaturase activity. Converts D-erythro-sphinganine to D-erythro-sphingosine (E-sphing-4-enine). Catalyzes the equilibrium isomerization of retinols. The protein is Sphingolipid delta(4)-desaturase DES1 (degs1) of Xenopus tropicalis (Western clawed frog).